The following is a 621-amino-acid chain: Na(+)/H(+) antiporter NhaA (621 aa).

The interval 1-430 (MPASSFGESS…LGWLIFKVAA (430 aa)) is na(+)/H(+) antiporter NhaA. Helical transmembrane passes span 27-47 (GAAVLLVIVTVVALVWANSPL), 72-92 (LHHWVNDGLMVVFFFLIGLEV), 109-129 (LALIAGVTGVVLPALVYVLIV), 139-159 (GWGAVVGTDTAFMLGTLAIVG), 168-188 (VFLLTLTVVDDFLAVSIIGIV), 192-212 (EIRIVPLLIALASLVGLWLLG), 223-243 (VLIVIVLWFATVYSGIHASLA), 300-320 (FLRLPTALLIVPIFALANAGV), 339-359 (VIAGLVLGKLLGIGLTTLVAV), 375-395 (VFGGAALSGIGFTVSLLIIGL), and 409-429 (VGVLVSMVFATLLGWLIFKVA). Residues 431-578 (QRWGEKTADL…VERDLASAVA (148 aa)) form the Thioredoxin domain.

It in the N-terminal section; belongs to the NhaA Na(+)/H(+) (TC 2.A.33) antiporter family.

The protein localises to the cell inner membrane. It carries out the reaction Na(+)(in) + 2 H(+)(out) = Na(+)(out) + 2 H(+)(in). Na(+)/H(+) antiporter that extrudes sodium in exchange for external protons. The protein is Na(+)/H(+) antiporter NhaA of Herminiimonas arsenicoxydans.